A 170-amino-acid chain; its full sequence is Lipoprotein signal peptidase (170 aa).

Transmembrane regions (helical) follow at residues 5–25 (VYHQYWFWYLAAFVVFLLDQG), 70–90 (WFFTIVAVAASVLLIVWICRV), and 98–118 (AFALSFILGGAVGNLYDRIIH). Residues Asp123 and Asp141 contribute to the active site. A helical membrane pass occupies residues 137–157 (FNLADAAISLGAMVLIADLFI).

Belongs to the peptidase A8 family.

The protein localises to the cell inner membrane. The enzyme catalyses Release of signal peptides from bacterial membrane prolipoproteins. Hydrolyzes -Xaa-Yaa-Zaa-|-(S,diacylglyceryl)Cys-, in which Xaa is hydrophobic (preferably Leu), and Yaa (Ala or Ser) and Zaa (Gly or Ala) have small, neutral side chains.. The protein operates within protein modification; lipoprotein biosynthesis (signal peptide cleavage). In terms of biological role, this protein specifically catalyzes the removal of signal peptides from prolipoproteins. This Cellvibrio japonicus (strain Ueda107) (Pseudomonas fluorescens subsp. cellulosa) protein is Lipoprotein signal peptidase.